Consider the following 668-residue polypeptide: UvrABC system protein C (668 aa).

In terms of domain architecture, GIY-YIG spans 14–91 (DSPGCYLHKD…IQRYKPKYNI (78 aa)). The UVR domain maps to 196-231 (KKIVNELEAKMMVSSDNMEFEQAAEYRDVIKAIGTL).

It belongs to the UvrC family. Interacts with UvrB in an incision complex.

It localises to the cytoplasm. In terms of biological role, the UvrABC repair system catalyzes the recognition and processing of DNA lesions. UvrC both incises the 5' and 3' sides of the lesion. The N-terminal half is responsible for the 3' incision and the C-terminal half is responsible for the 5' incision. In Lactococcus lactis subsp. lactis (strain IL1403) (Streptococcus lactis), this protein is UvrABC system protein C.